The following is a 597-amino-acid chain: MKNIRNFSIIAHIDHGKSTLADRMIQECGVITARDFQDQLLDNMDIERERGITIKSQTVCLPYTAKDGKEYILNLVDTPGHVDFSYEVSRALTSCEGALLIVDAAQGVEAQTLANLYLAMENDLEIIPVINKIDLPSAEPEKVALQIEEDLGLDADLIQLCSAKTGVGVHEILDSIVEHLPAPEGDAKAPLQALIFDANYDPFRGTIISVRLINGTVKAGDIIRFMSTGIEYKVEEVGLFKVQREARKTLSAGEVGYILAGIKTVQDTRPGETITLKANPCEAALAGFQEVQQVVFSSIYPIDTDDYEDLVVALEKLKLNDAALTFEKDSSVALGFGFRCGFLGLLHLEVVQERLEREFNISLILTVPSVKYIFTLSDGTTKEVDNPAHFPDPTHIDEVKEPFIKASILIPEKYMGAVMNLCMERRGENTTFHYPTPGRIEFICELPLAEVIYDFYDRLKSVTQGYGSFDYELIDYRKSDLVKLDILVNSEPVDALSQLVHRVNARKRGLHSCEMLKEEIPRQMFKIAIQAAIGGNVVARTNISAMRKDVTAKCYGGDISRKRKLLEKQKAGKKRMKTVGNVDIPQTAFLAVLKSEQ.

One can recognise a tr-type G domain in the interval 2 to 184 (KNIRNFSIIA…SIVEHLPAPE (183 aa)). Residues 14–19 (DHGKST) and 131–134 (NKID) contribute to the GTP site.

This sequence belongs to the TRAFAC class translation factor GTPase superfamily. Classic translation factor GTPase family. LepA subfamily.

The protein resides in the cell inner membrane. It carries out the reaction GTP + H2O = GDP + phosphate + H(+). In terms of biological role, required for accurate and efficient protein synthesis under certain stress conditions. May act as a fidelity factor of the translation reaction, by catalyzing a one-codon backward translocation of tRNAs on improperly translocated ribosomes. Back-translocation proceeds from a post-translocation (POST) complex to a pre-translocation (PRE) complex, thus giving elongation factor G a second chance to translocate the tRNAs correctly. Binds to ribosomes in a GTP-dependent manner. The chain is Elongation factor 4 from Desulfotalea psychrophila (strain LSv54 / DSM 12343).